Consider the following 59-residue polypeptide: Small, acid-soluble spore protein H (59 aa).

Belongs to the SspH family.

Its subcellular location is the spore core. The polypeptide is Small, acid-soluble spore protein H (Alkaliphilus metalliredigens (strain QYMF)).